A 192-amino-acid chain; its full sequence is Charged multivesicular body protein 1 (192 aa).

Coiled coils occupy residues Gln7–Lys35 and Asn102–Gln125. The segment at Gln164–Asn192 is disordered.

Belongs to the SNF7 family. In terms of assembly, probable peripherally associated component of the endosomal sorting required for transport complex III (ESCRT-III).

It is found in the endosome membrane. Probable peripherally associated component of the endosomal sorting required for transport complex III (ESCRT-III) which is involved in multivesicular bodies (MVBs) formation and sorting of endosomal cargo proteins into MVBs. MVBs contain intraluminal vesicles (ILVs) that are generated by invagination and scission from the limiting membrane of the endosome and are delivered to lysosomes enabling degradation of membrane proteins. This chain is Charged multivesicular body protein 1 (chmp1), found in Dictyostelium discoideum (Social amoeba).